We begin with the raw amino-acid sequence, 233 residues long: Large ribosomal subunit protein uL1 (233 aa).

It belongs to the universal ribosomal protein uL1 family. Part of the 50S ribosomal subunit.

Functionally, binds directly to 23S rRNA. The L1 stalk is quite mobile in the ribosome, and is involved in E site tRNA release. Its function is as follows. Protein L1 is also a translational repressor protein, it controls the translation of the L11 operon by binding to its mRNA. The chain is Large ribosomal subunit protein uL1 from Deinococcus deserti (strain DSM 17065 / CIP 109153 / LMG 22923 / VCD115).